A 500-amino-acid polypeptide reads, in one-letter code: L-arabinose isomerase (500 aa).

Mn(2+) is bound by residues Glu-306, Glu-333, His-349, and His-448.

The protein belongs to the arabinose isomerase family. It depends on Mn(2+) as a cofactor.

It carries out the reaction beta-L-arabinopyranose = L-ribulose. The protein operates within carbohydrate degradation; L-arabinose degradation via L-ribulose; D-xylulose 5-phosphate from L-arabinose (bacterial route): step 1/3. In terms of biological role, catalyzes the conversion of L-arabinose to L-ribulose. In Koribacter versatilis (strain Ellin345), this protein is L-arabinose isomerase.